Reading from the N-terminus, the 503-residue chain is Palmitoleoyl-protein carboxylesterase NOTUM (503 aa).

An N-terminal signal peptide occupies residues 1-19 (MGGEVRVLLLLGLLHWVGG). The tract at residues 23-53 (RKTWRRRGQQPPQPPPPPPLPQRAEVEPGAG) is disordered. The segment covering 33–43 (PPQPPPPPPLP) has biased composition (pro residues). Ser88 bears the Phosphoserine mark. A glycan (N-linked (GlcNAc...) asparagine) is linked at Asn103. Residues Ser239, Asp347, and His396 each act as charge relay system in the active site.

This sequence belongs to the pectinacetylesterase family. Notum subfamily. Widely expressed. Expressed in lung, ovary, kidney, liver and brain. Not detected in thymus, heart, spleen, stomach, skeletal muscle and bone marrow.

The protein localises to the secreted. It catalyses the reaction [Wnt protein]-O-(9Z)-hexadecenoyl-L-serine + H2O = [Wnt protein]-L-serine + (9Z)-hexadecenoate + H(+). Functionally, carboxylesterase that acts as a key negative regulator of the Wnt signaling pathway by specifically mediating depalmitoleoylation of WNT proteins. Serine palmitoleoylation of WNT proteins is required for efficient binding to frizzled receptors. This is Palmitoleoyl-protein carboxylesterase NOTUM from Mus musculus (Mouse).